We begin with the raw amino-acid sequence, 480 residues long: UDP-glucose 6-dehydrogenase 3 (480 aa).

NAD(+)-binding positions include glycine 8–glycine 13, aspartate 33, arginine 38, valine 86–threonine 90, serine 127–threonine 128, and glutamate 161. Substrate is bound by residues glutamate 157–glutamate 161, lysine 216–leucine 223, and arginine 256–glycine 269. The Nucleophile role is filled by cysteine 272. Cysteine 272–lysine 275 provides a ligand contact to NAD(+). Position 334–335 (phenylalanine 334–lysine 335) interacts with substrate. Arginine 342 is an NAD(+) binding site. Serine 393 carries the post-translational modification Phosphoserine. Arginine 447 serves as a coordination point for substrate.

It belongs to the UDP-glucose/GDP-mannose dehydrogenase family.

The catalysed reaction is UDP-alpha-D-glucose + 2 NAD(+) + H2O = UDP-alpha-D-glucuronate + 2 NADH + 3 H(+). It functions in the pathway nucleotide-sugar biosynthesis; UDP-alpha-D-glucuronate biosynthesis; UDP-alpha-D-glucuronate from UDP-alpha-D-glucose: step 1/1. In terms of biological role, involved in the biosynthesis of UDP-glucuronic acid (UDP-GlcA), providing nucleotide sugars for cell-wall polymers. The protein is UDP-glucose 6-dehydrogenase 3 (UGD3) of Oryza sativa subsp. japonica (Rice).